The sequence spans 462 residues: 3-isopropylmalate dehydratase large subunit (462 aa).

[4Fe-4S] cluster contacts are provided by C337, C397, and C400.

This sequence belongs to the aconitase/IPM isomerase family. LeuC type 1 subfamily. In terms of assembly, heterodimer of LeuC and LeuD. Requires [4Fe-4S] cluster as cofactor.

It carries out the reaction (2R,3S)-3-isopropylmalate = (2S)-2-isopropylmalate. The protein operates within amino-acid biosynthesis; L-leucine biosynthesis; L-leucine from 3-methyl-2-oxobutanoate: step 2/4. Its function is as follows. Catalyzes the isomerization between 2-isopropylmalate and 3-isopropylmalate, via the formation of 2-isopropylmaleate. This chain is 3-isopropylmalate dehydratase large subunit, found in Listeria monocytogenes serotype 4a (strain HCC23).